The sequence spans 361 residues: Queuine tRNA-ribosyltransferase (361 aa).

Asp-92 acts as the Proton acceptor in catalysis. Residues 92-96, Asp-146, Gln-189, and Gly-216 each bind substrate; that span reads DSGGF. An RNA binding region spans residues 247–253; sequence GVGKPAD. Asp-266 functions as the Nucleophile in the catalytic mechanism. The RNA binding; important for wobble base 34 recognition stretch occupies residues 271-275; that stretch reads TRAGR. Zn(2+)-binding residues include Cys-304, Cys-306, Cys-309, and His-335.

It belongs to the queuine tRNA-ribosyltransferase family. Homodimer. Within each dimer, one monomer is responsible for RNA recognition and catalysis, while the other monomer binds to the replacement base PreQ1. Requires Zn(2+) as cofactor.

It catalyses the reaction 7-aminomethyl-7-carbaguanine + guanosine(34) in tRNA = 7-aminomethyl-7-carbaguanosine(34) in tRNA + guanine. It participates in tRNA modification; tRNA-queuosine biosynthesis. Functionally, catalyzes the base-exchange of a guanine (G) residue with the queuine precursor 7-aminomethyl-7-deazaguanine (PreQ1) at position 34 (anticodon wobble position) in tRNAs with GU(N) anticodons (tRNA-Asp, -Asn, -His and -Tyr). Catalysis occurs through a double-displacement mechanism. The nucleophile active site attacks the C1' of nucleotide 34 to detach the guanine base from the RNA, forming a covalent enzyme-RNA intermediate. The proton acceptor active site deprotonates the incoming PreQ1, allowing a nucleophilic attack on the C1' of the ribose to form the product. After dissociation, two additional enzymatic reactions on the tRNA convert PreQ1 to queuine (Q), resulting in the hypermodified nucleoside queuosine (7-(((4,5-cis-dihydroxy-2-cyclopenten-1-yl)amino)methyl)-7-deazaguanosine). The chain is Queuine tRNA-ribosyltransferase from Rickettsia massiliae (strain Mtu5).